Reading from the N-terminus, the 67-residue chain is uncharacterized protein (67 aa).

This is an uncharacterized protein from Fowlpox virus (strain NVSL) (FPV).